We begin with the raw amino-acid sequence, 254 residues long: Ubiquinone/menaquinone biosynthesis C-methyltransferase UbiE (254 aa).

Residues threonine 77, aspartate 98, 126 to 127 (DA), and serine 143 each bind S-adenosyl-L-methionine.

It belongs to the class I-like SAM-binding methyltransferase superfamily. MenG/UbiE family.

It carries out the reaction a 2-demethylmenaquinol + S-adenosyl-L-methionine = a menaquinol + S-adenosyl-L-homocysteine + H(+). The catalysed reaction is a 2-methoxy-6-(all-trans-polyprenyl)benzene-1,4-diol + S-adenosyl-L-methionine = a 5-methoxy-2-methyl-3-(all-trans-polyprenyl)benzene-1,4-diol + S-adenosyl-L-homocysteine + H(+). It functions in the pathway quinol/quinone metabolism; menaquinone biosynthesis; menaquinol from 1,4-dihydroxy-2-naphthoate: step 2/2. Its pathway is cofactor biosynthesis; ubiquinone biosynthesis. Its function is as follows. Methyltransferase required for the conversion of demethylmenaquinol (DMKH2) to menaquinol (MKH2) and the conversion of 2-polyprenyl-6-methoxy-1,4-benzoquinol (DDMQH2) to 2-polyprenyl-3-methyl-6-methoxy-1,4-benzoquinol (DMQH2). This is Ubiquinone/menaquinone biosynthesis C-methyltransferase UbiE from Blochmanniella pennsylvanica (strain BPEN).